Here is a 305-residue protein sequence, read N- to C-terminus: Major pollen allergen Pha a 5.2 (305 aa).

Positions 1-25 are cleaved as a signal peptide; sequence MAVQKYTVALFLAVALVAGPAALYA. Basic and acidic residues predominate over residues 65–85; sequence GLNEEKNAARQTDDEQKRSDE. Disordered stretches follow at residues 65 to 87 and 279 to 299; these read GLNEEKNAARQTDDEQKRSDEIN and STATPAAPPPPQLGTATPAAV.

This sequence belongs to the Poa p IX/Phl p VI allergen family.

This Phalaris aquatica (Canary grass) protein is Major pollen allergen Pha a 5.2.